Consider the following 366-residue polypeptide: 2-oxoglutarate synthase subunit KorA (366 aa).

As to quaternary structure, heterotetramer of the KorA, KorB, KorC and KorD subunits.

The enzyme catalyses 2 oxidized [2Fe-2S]-[ferredoxin] + 2-oxoglutarate + CoA = succinyl-CoA + 2 reduced [2Fe-2S]-[ferredoxin] + CO2 + H(+). The protein is 2-oxoglutarate synthase subunit KorA (korA) of Methanocaldococcus jannaschii (strain ATCC 43067 / DSM 2661 / JAL-1 / JCM 10045 / NBRC 100440) (Methanococcus jannaschii).